The sequence spans 353 residues: Cytochrome c biogenesis protein CcsA (353 aa).

Helical transmembrane passes span 15–35 (FAIL…PNLP), 37–57 (LAAL…TLLG), 68–88 (LSNL…VHLI), 97–117 (LVGV…TMTL), 142–162 (VMML…AFLI), 261–281 (IIGL…VWAN), 288–308 (WSWD…AAYL), and 322–342 (AILA…VNLL).

This sequence belongs to the CcmF/CycK/Ccl1/NrfE/CcsA family. In terms of assembly, may interact with ccs1.

It is found in the cellular thylakoid membrane. Its function is as follows. Required during biogenesis of c-type cytochromes (cytochrome c6 and cytochrome f) at the step of heme attachment. This is Cytochrome c biogenesis protein CcsA from Nostoc punctiforme (strain ATCC 29133 / PCC 73102).